A 357-amino-acid chain; its full sequence is Guanine nucleotide-binding protein alpha-1 subunit (357 aa).

The N-myristoyl glycine moiety is linked to residue Gly2. Cys4 carries the S-palmitoyl cysteine lipid modification. In terms of domain architecture, G-alpha spans Asn32–Tyr357. The segment at Lys35–Thr48 is G1 motif. Positions 43, 44, 45, 46, 47, 48, 151, 176, 182, 204, 270, 271, 273, and 329 each coordinate GTP. Ser47 contacts Mg(2+). Positions Asp174–Thr182 are G2 motif. Thr182 is a binding site for Mg(2+). The interval Phe197–Arg206 is G3 motif. The interval Ile266–Asp273 is G4 motif. Residues Thr327–Thr332 are G5 motif.

This sequence belongs to the G-alpha family. G proteins are composed of 3 units; alpha, beta and gamma. The alpha chain contains the guanine nucleotide binding site. Requires Mg(2+) as cofactor.

In terms of biological role, guanine nucleotide-binding proteins (G proteins) are involved as modulators or transducers in various transmembrane signaling systems. This chain is Guanine nucleotide-binding protein alpha-1 subunit (gpa-1), found in Caenorhabditis elegans.